The chain runs to 1017 residues: EMILIN-1 (1017 aa).

The signal sequence occupies residues 1–21; the sequence is MAPRALWSCYLCCLLTIATEA. Residues 56 to 133 form the EMI domain; that stretch reads HRNWCAYVVT…QGYGGDDCGE (78 aa). 3 disulfide bridges follow: C60–C123, C87–C94, and C122–C131. 2 disordered regions span residues 134-180 and 259-289; these read GPAS…SEKV and ELGH…GPSE. Residues 154-167 show a composition bias toward low complexity; it reads RPNLSGSSAGSHLS. The N-linked (GlcNAc...) asparagine glycan is linked to N156. Coiled coils occupy residues 171–211, 237–266, and 310–374; these read GEGP…LAED, ETLS…LNNH, and LDGF…DVVT. The disordered stretch occupies residues 383 to 403; that stretch reads RRGSELGGAAGQGGHPPGYTS. Gly residues predominate over residues 387 to 398; the sequence is ELGGAAGQGGHP. 4 N-linked (GlcNAc...) asparagine glycosylation sites follow: N416, N456, N562, and N659. Residues 519-573 adopt a coiled-coil conformation; it reads LHEAEAAGEAQQAVLEGLQGLLSRLRERMDAQEETAAEILLRLNLTAAQLSQLEG. Residues 676–697 adopt a coiled-coil conformation; the sequence is LADLGATKDSIISEINRLQQEA. N-linked (GlcNAc...) asparagine glycans are attached at residues N767 and N795. A coiled-coil region spans residues 789–809; the sequence is RRLGALNNSLLLLEDRLQQLS. A compositionally biased stretch (low complexity) spans 811–820; sequence KDFTGPSGKA. The segment at 811–866 is disordered; it reads KDFTGPSGKAGPPGPPGLQGPSGPAGPPGPPGKDGQQGAIGPPGPQGEQGAEGAPA. The Collagen-like domain maps to 815 to 865; that stretch reads GPSGKAGPPGPPGLQGPSGPAGPPGPPGKDGQQGAIGPPGPQGEQGAEGAP. Residues 822–841 show a composition bias toward pro residues; it reads PPGPPGLQGPSGPAGPPGPP. Low complexity predominate over residues 843 to 866; it reads KDGQQGAIGPPGPQGEQGAEGAPA. The C1q domain maps to 867–1014; it reads APVPRVAFSA…GALLYEDTEL (148 aa).

As to quaternary structure, homotrimer associated through a moderately stable interaction of the C-terminal globular C1q domains, allowing the nucleation of the triple helix and then a further quaternary assembly to higher-order polymers via intermolecular disulfide bonds. Interacts with EMILIN2. Interacts with EFEMP2; this interaction promotes the incorporation of EFEMP2 into the extracellular matrix.

The protein localises to the secreted. The protein resides in the extracellular space. Its subcellular location is the extracellular matrix. Its function is as follows. Involved in elastic and collagen fibers formation. It is required for EFEMP2 deposition into the extracellular matrix, and collagen network assembly and cross-linking via protein-lysine 6-oxidase/LOX activity. May be responsible for anchoring smooth muscle cells to elastic fibers, and may be involved the processes that regulate vessel assembly. Has cell adhesive capacity. May have a function in placenta formation and initial organogenesis and a later role in interstitial connective tissue. The protein is EMILIN-1 (Emilin1) of Mus musculus (Mouse).